The following is a 127-amino-acid chain: Glycine cleavage system H protein (127 aa).

In terms of domain architecture, Lipoyl-binding spans 24 to 105 (TLTIGITDLA…AYDAWLFKIK (82 aa)). Lys-65 carries the post-translational modification N6-lipoyllysine.

Belongs to the GcvH family. In terms of assembly, the glycine cleavage system is composed of four proteins: P, T, L and H. (R)-lipoate is required as a cofactor.

In terms of biological role, the glycine cleavage system catalyzes the degradation of glycine. The H protein shuttles the methylamine group of glycine from the P protein to the T protein. This Ralstonia nicotianae (strain ATCC BAA-1114 / GMI1000) (Ralstonia solanacearum) protein is Glycine cleavage system H protein.